The chain runs to 373 residues: ATP synthase gamma chain 1, chloroplastic (373 aa).

The transit peptide at 1-50 (MACSNLTTMWVSSKPSLSADSSSLSFRSVLKCPTNTSSPPSRASSVSPLQ) directs the protein to the chloroplast. Residue Cys-139 is part of the active site. Cysteines 249 and 255 form a disulfide. Ser-347 is modified (phosphoserine).

This sequence belongs to the ATPase gamma chain family. As to quaternary structure, F-type ATPases have 2 components, CF(1) - the catalytic core - and CF(0) - the membrane proton channel. CF(1) has five subunits: alpha(3), beta(3), gamma(1), delta(1), epsilon(1). CF(0) has four main subunits: a, b, b' and c. Interacts with PAB.

Its subcellular location is the plastid. It is found in the chloroplast thylakoid membrane. Functionally, produces ATP from ADP in the presence of a proton gradient across the membrane. The gamma chain is believed to be important in regulating ATPase activity and the flow of protons through the CF(0) complex. This Arabidopsis thaliana (Mouse-ear cress) protein is ATP synthase gamma chain 1, chloroplastic (ATPC1).